Consider the following 90-residue polypeptide: MKISLVTWLITALCLMEIEEIDGDTPGNYPVDFQGIYYECIVYNRCERDCKIHGASYGYCYAGVCFCEYLPDENKNFWDVMKKQCDYMNN.

The first 23 residues, 1–23 (MKISLVTWLITALCLMEIEEIDG), serve as a signal peptide directing secretion. The LCN-type CS-alpha/beta domain occupies 26 to 86 (PGNYPVDFQG…FWDVMKKQCD (61 aa)). Disulfide bonds link C40-C60, C46-C65, and C50-C67.

It belongs to the long (3 C-C) scorpion toxin superfamily. In terms of assembly, monomer (edited version) and heterodimer (non-edited version) of this alpha chain and a beta chain (AC P0CI43). As to expression, expressed by the venom gland.

It localises to the secreted. In terms of biological role, the edited BmKBTx-like may modulate voltage-gated sodium channels (Nav). The non-edited form is able to form a heterodimer. In orthologs, a heterodimer with LVP beta-chain induces lipolysis in rat adipocytes, which is mediated through the beta-2 adrenergic receptor pathway (ADRB2). Since no LVP beta-chains have been identified in the venom of this scorpion, it is possible that this protein is not involved in a lipolysis process. This is Putative sodium channel toxin Ts28 from Tityus serrulatus (Brazilian scorpion).